Reading from the N-terminus, the 766-residue chain is Phospholipid phosphatase-related protein type 4 (766 aa).

Serine 37 is subject to Phosphoserine. The next 4 membrane-spanning stretches (helical) occupy residues 68-88, 120-140, 179-199, and 248-268; these read LPCF…SLYF, AIPF…TIMV, FVGV…IIQL, and SFPS…SMYF. An N-linked (GlcNAc...) asparagine glycan is attached at asparagine 269. 2 helical membrane-spanning segments follow: residues 277–297 and 309–329; these read KLLK…CGLT and VYCG…YAVG. Serine 347 carries the post-translational modification Phosphoserine. Asparagine 363 is a glycosylation site (N-linked (GlcNAc...) asparagine). Serine 386 carries the post-translational modification Phosphoserine. Asparagine 433 carries N-linked (GlcNAc...) asparagine glycosylation. A Phosphoserine modification is found at serine 439. Disordered regions lie at residues 454 to 503 and 510 to 529; these read SKNE…GNQY and TVPG…IQSR. N-linked (GlcNAc...) asparagine glycosylation is present at asparagine 456. Serine 462 and serine 474 each carry phosphoserine. 2 N-linked (GlcNAc...) asparagine glycosylation sites follow: asparagine 515 and asparagine 545. Serine 608 carries the post-translational modification Phosphoserine. 3 disordered regions span residues 634–654, 672–705, and 741–766; these read PIIQ…KWKA, DSES…GITT, and PERS…PYKD. Basic residues predominate over residues 688-702; that stretch reads RKRKHIDSNEHHHHG. The span at 743-752 shows a compositional bias: polar residues; the sequence is RSNSPENTRN.

It belongs to the PA-phosphatase related phosphoesterase family. O-glycosylated. Probably at Ser-347. Specifically expressed in neurons (at protein level).

The protein localises to the postsynaptic density membrane. Postsynaptic density membrane protein that indirectly regulates glutamatergic synaptic transmission through lysophosphatidic acid (LPA)-mediated signaling pathways. Binds lysophosphatidic acid (LPA) and mediates its internalization into cells. Could act as receptor or a transporter of this lipid at the post-synaptic membrane. Modulates lysophosphatidic acid (LPA) activity in neuron axonal outgrowth during development by attenuating phospholipid-induced axon collapse. This Rattus norvegicus (Rat) protein is Phospholipid phosphatase-related protein type 4.